The primary structure comprises 538 residues: MAENLKRLVSNEALRTLQEKLDSWLKEYNTNTCDQNLNHCLELIEQVAKVQGQLFGILTTAAQEGGHNDGVETIKSRLLPWLEASFTAASMGKPVDSKVPSLQNTFDRERRKDPSPRDRDMQQLDSNLNSTRSQLNQVQDDLAETEKNLEETKNRSAISLLAAEEEINQLKKQLKTLQAQEDARHRHTDQRSSENRRSEPRSSEERRCEQWSSLKRNADQRDTEVTSDYKKQLRNLKEEIAVLSAEKSALQGRSSRSRSPSPAPRSRSCSRSRSASPSTAVKVRSPSPNRSKLSNVARKAALLSRFSDSYSQARLDAQCLLRRCIDKAETVQRIIYIATVEAFHVAKMAFRHFKIRVRKSLTPSYVGSNDFENAVSDYVICHLDLYDSQSSVNDVIRAMNVNPKISFPPVVDFCLLSDFIQEICCIAFAMQALEPPLDIAYGADGEVFNDCKYRRSYDSDFTAPLVLYHVWPALMENDCVIMKGEAVTRRGAFWNSVRSLSRCRSRSLSPICPRSQIGLSTMSRSRSPSPIRCGLPRF.

The segment at 1 to 273 (MAENLKRLVS…PRSRSCSRSR (273 aa)) is interaction with YWHAG/14-3-3 protein gamma. A Phosphoserine modification is found at Ser-85. The interval 92–137 (GKPVDSKVPSLQNTFDRERRKDPSPRDRDMQQLDSNLNSTRSQLNQ) is disordered. The segment covering 106-122 (FDRERRKDPSPRDRDMQ) has biased composition (basic and acidic residues). Coiled coils occupy residues 118–186 (DRDM…ARHR) and 220–256 (QRDT…RSSR). A compositionally biased stretch (polar residues) spans 123-137 (QLDSNLNSTRSQLNQ). 2 positions are modified to phosphoserine: Ser-156 and Ser-159. Disordered stretches follow at residues 174-227 (LKTL…EVTS) and 247-292 (KSAL…NRSK). 2 stretches are compositionally biased toward basic and acidic residues: residues 181–209 (EDAR…RRCE) and 216–227 (RNADQRDTEVTS). A compositionally biased stretch (low complexity) spans 253–278 (RSSRSRSPSPAPRSRSCSRSRSASPS). 3 positions are modified to phosphoserine: Ser-285, Ser-287, and Ser-509.

This sequence belongs to the MIEAP family. Interacts (via coiled-coil domains) with BNIP3L (via BH3 domain). Interacts (via coiled-coil domains) with BNIP3 (via BH3 domain). Interacts with YWHAG/14-3-3 protein gamma; a protein that also plays a role in MALM.

It localises to the cytoplasm. It is found in the cytosol. The protein resides in the mitochondrion outer membrane. Its subcellular location is the mitochondrion matrix. Its function is as follows. Key regulator of mitochondrial quality that mediates the repairing or degradation of unhealthy mitochondria in response to mitochondrial damage. Mediator of mitochondrial protein catabolic process (also named MALM) by mediating the degradation of damaged proteins inside mitochondria by promoting the accumulation in the mitochondrial matrix of hydrolases that are characteristic of the lysosomal lumen. Also involved in mitochondrion degradation of damaged mitochondria by promoting the formation of vacuole-like structures (named MIV), which engulf and degrade unhealthy mitochondria by accumulating lysosomes. The physical interaction of SPATA18/MIEAP, BNIP3 and BNIP3L/NIX at the mitochondrial outer membrane regulates the opening of a pore in the mitochondrial double membrane in order to mediate the translocation of lysosomal proteins from the cytoplasm to the mitochondrial matrix. Binds cardiolipin. May form molecular condensates (non-membrane-bounded organelles) within mitochondria that compartmentalize and promote cardiolipin metabolism. The protein is Mitochondria-eating protein (SPATA18) of Macaca fascicularis (Crab-eating macaque).